We begin with the raw amino-acid sequence, 337 residues long: Cytochrome P450 monooxygenase dpmpJ (337 aa).

A helical transmembrane segment spans residues 4-24 (LILHHPYASLAAGILLYFFCL). N-linked (GlcNAc...) asparagine glycosylation is present at asparagine 158.

The protein belongs to the cytochrome P450 family. It depends on heme as a cofactor.

It localises to the membrane. It functions in the pathway secondary metabolite biosynthesis; terpenoid biosynthesis. In terms of biological role, cytochrome P450 monooxygenase; part of the gene cluster that mediates the biosynthesis of diterpenoid pyrones. The first step of the pathway is the synthesis of the alpha-pyrone moiety by the polyketide synthase dpmpA via condensation of one acetyl-CoA starter unit with 3 malonyl-CoA units and 2 methylations. The alpha-pyrone is then combined with geranylgeranyl pyrophosphate (GGPP) formed by the GGPP synthase dpmpD through the action of the prenyltransferase dpmpC to yield a linear alpha-pyrone diterpenoid. Subsequent steps in the diterpenoid pyrone biosynthetic pathway involve the decalin core formation, which is initiated by the epoxidation of the C10-C11 olefin by the FAD-dependent oxidoreductase dpmpE, and is followed by a cyclization cascade catalyzed by the terpene cyclase dpmpB. The short chain dehydrogenase/reductase dpmpG then oxidizes the 8S hydroxy group to a ketone and the short chain dehydrogenase/reductase dpmpH reduces the ketone to the 8R hydroxy group to yield higginsianin B. Higginsianin B is further methylated by the methyltransferase dpmpI to produce the intermediate named FDDP B. The cytochrome P450 monooxygenase dpmpJ then oxidizes the C-26 methyl to primary alcohol, producing the final diterpenoid pyrone with a C-26 primary alcohol on the gamma-pyrone moiety named FDDP C. The polypeptide is Cytochrome P450 monooxygenase dpmpJ (Macrophomina phaseolina (strain MS6) (Charcoal rot fungus)).